The primary structure comprises 398 residues: uncharacterized protein (398 aa).

Residues 235-351 (VAIVEFSARR…DIVNALNAAL (117 aa)) enclose the CobW C-terminal domain.

This is an uncharacterized protein from Mycobacterium bovis (strain ATCC BAA-935 / AF2122/97).